The following is a 251-amino-acid chain: uncharacterized protein (251 aa).

A disordered region spans residues 1-22 (MTQLPELGLRSPNNKSPTGPHP).

This is an uncharacterized protein from Homo sapiens (Human).